Consider the following 255-residue polypeptide: Large ribosomal subunit protein uL4 (255 aa).

It belongs to the universal ribosomal protein uL4 family. Part of the 50S ribosomal subunit.

In terms of biological role, one of the primary rRNA binding proteins, this protein initially binds near the 5'-end of the 23S rRNA. It is important during the early stages of 50S assembly. It makes multiple contacts with different domains of the 23S rRNA in the assembled 50S subunit and ribosome. Functionally, forms part of the polypeptide exit tunnel. In Thermococcus gammatolerans (strain DSM 15229 / JCM 11827 / EJ3), this protein is Large ribosomal subunit protein uL4.